The primary structure comprises 429 residues: DNA primase DnaG (429 aa).

The 75-residue stretch at 172-246 (DSIIVVEGRN…DVDFIARAPP (75 aa)) folds into the Toprim domain. The Mg(2+) site is built by E178, D220, and D222. The disordered stretch occupies residues 287-322 (RNTKELEERQGNELKNERPEKINENEESEKNVELKE).

It belongs to the archaeal DnaG primase family. Forms a ternary complex with MCM helicase and DNA. Component of the archaeal exosome complex. Requires Mg(2+) as cofactor.

It carries out the reaction ssDNA + n NTP = ssDNA/pppN(pN)n-1 hybrid + (n-1) diphosphate.. In terms of biological role, RNA polymerase that catalyzes the synthesis of short RNA molecules used as primers for DNA polymerase during DNA replication. Also part of the exosome, which is a complex involved in RNA degradation. Acts as a poly(A)-binding protein that enhances the interaction between heteromeric, adenine-rich transcripts and the exosome. This is DNA primase DnaG from Picrophilus torridus (strain ATCC 700027 / DSM 9790 / JCM 10055 / NBRC 100828 / KAW 2/3).